The sequence spans 429 residues: S-adenosylmethionine synthase (429 aa).

Histidine 14 lines the ATP pocket. Aspartate 16 provides a ligand contact to Mg(2+). Glutamate 42 contributes to the K(+) binding site. Glutamate 55 and glutamine 98 together coordinate L-methionine. The flexible loop stretch occupies residues 98–108 (QSADINRGVDR). ATP-binding positions include 165–167 (DAK), 252–253 (KF), aspartate 261, 267–268 (RK), alanine 284, and lysine 288. Aspartate 261 is an L-methionine binding site. Lysine 292 provides a ligand contact to L-methionine.

The protein belongs to the AdoMet synthase family. In terms of assembly, homotetramer; dimer of dimers. Mg(2+) serves as cofactor. It depends on K(+) as a cofactor.

The protein localises to the cytoplasm. The catalysed reaction is L-methionine + ATP + H2O = S-adenosyl-L-methionine + phosphate + diphosphate. The protein operates within amino-acid biosynthesis; S-adenosyl-L-methionine biosynthesis; S-adenosyl-L-methionine from L-methionine: step 1/1. Catalyzes the formation of S-adenosylmethionine (AdoMet) from methionine and ATP. The overall synthetic reaction is composed of two sequential steps, AdoMet formation and the subsequent tripolyphosphate hydrolysis which occurs prior to release of AdoMet from the enzyme. The polypeptide is S-adenosylmethionine synthase (Porphyromonas gingivalis (strain ATCC BAA-308 / W83)).